The primary structure comprises 766 residues: Dipeptidyl peptidase 4 (766 aa).

Residues 1 to 6 lie on the Cytoplasmic side of the membrane; it reads MKTPWK. The chain crosses the membrane as a helical; Signal-anchor for type II membrane protein span at residues 7 to 27; it reads VLLGLLGIAALVTVITVPVVL. The Extracellular segment spans residues 28–766; that stretch reads LNKGTDDAAA…HFLKQCFSLP (739 aa). N-linked (GlcNAc...) asparagine glycans are attached at residues N85, N92, N150, N179, N219, N229, N279, and N321. Cystine bridges form between C385–C394, C444–C447, and C454–C472. The Charge relay system role is filled by S630. A disulfide bond links C649 and C762. N-linked (GlcNAc...) asparagine glycosylation occurs at N685. Residues D708 and H740 each act as charge relay system in the active site.

Belongs to the peptidase S9B family. DPPIV subfamily. Monomer. Homodimer. Heterodimer with Seprase (FAP). Requires homodimerization for optimal dipeptidyl peptidase activity and T-cell costimulation. Found in a membrane raft complex, at least composed of BCL10, CARD11, DPP4 and IKBKB. Associates with collagen. Interacts with PTPRC; the interaction is enhanced in an interleukin-12-dependent manner in activated lymphocytes. Interacts (via extracellular domain) with ADA; does not inhibit its dipeptidyl peptidase activity. Interacts with CAV1 (via the N-terminus); the interaction is direct. Interacts (via cytoplasmic tail) with CARD11 (via PDZ domain); its homodimerization is necessary for interaction with CARD11. Interacts with IGF2R; the interaction is direct. Interacts with GPC3. In terms of processing, the soluble form (Dipeptidyl peptidase 4 soluble form also named SDPP) derives from the membrane form (Dipeptidyl peptidase 4 membrane form also named MDPP) by proteolytic processing. N- and O-Glycosylated. Post-translationally, phosphorylated. Mannose 6-phosphate residues in the carbohydrate moiety are necessary for interaction with IGF2R in activated T-cells. Mannose 6-phosphorylation is induced during T-cell activation.

Its subcellular location is the secreted. The protein resides in the cell membrane. It localises to the apical cell membrane. The protein localises to the cell projection. It is found in the invadopodium membrane. Its subcellular location is the lamellipodium membrane. The protein resides in the cell junction. It localises to the membrane raft. It catalyses the reaction Release of an N-terminal dipeptide, Xaa-Yaa-|-Zaa-, from a polypeptide, preferentially when Yaa is Pro, provided Zaa is neither Pro nor hydroxyproline.. Its activity is regulated as follows. Inhibited by GPC3 and diprotin A. In terms of biological role, cell surface glycoprotein receptor involved in the costimulatory signal essential for T-cell receptor (TCR)-mediated T-cell activation. Acts as a positive regulator of T-cell coactivation, by binding at least ADA, CAV1, IGF2R, and PTPRC. Its binding to CAV1 and CARD11 induces T-cell proliferation and NF-kappa-B activation in a T-cell receptor/CD3-dependent manner. Its interaction with ADA also regulates lymphocyte-epithelial cell adhesion. In association with FAP is involved in the pericellular proteolysis of the extracellular matrix (ECM), the migration and invasion of endothelial cells into the ECM. May be involved in the promotion of lymphatic endothelial cells adhesion, migration and tube formation. When overexpressed, enhanced cell proliferation, a process inhibited by GPC3. Also acts as a serine exopeptidase with a dipeptidyl peptidase activity that regulates various physiological processes by cleaving peptides in the circulation, including many chemokines, mitogenic growth factors, neuropeptides and peptide hormones such as brain natriuretic peptide 32. Removes N-terminal dipeptides sequentially from polypeptides having unsubstituted N-termini provided that the penultimate residue is proline. This chain is Dipeptidyl peptidase 4 (DPP4), found in Sus scrofa (Pig).